The following is a 349-amino-acid chain: Septin-2 (349 aa).

In terms of domain architecture, Septin-type G spans 33–305 (KGFEFTLMVV…ENFRSERLKR (273 aa)). A G1 motif region spans residues 43–50 (GESGLGKS). GTP is bound by residues 43-50 (GESGLGKS), T77, G103, 182-190 (KADTLTLKE), G240, and R255. The segment at 100–103 (DTPG) is G3 motif. The interval 181-184 (AKAD) is G4 motif. Residues 259 to 269 (WGVVEVENPEH) are important for dimerization.

The protein belongs to the TRAFAC class TrmE-Era-EngA-EngB-Septin-like GTPase superfamily. Septin GTPase family. In terms of assembly, septins polymerize into heterooligomeric protein complexes that form filaments, and associate with cellular membranes, actin filaments and microtubules. GTPase activity is required for filament formation. Can form heterooligomers with other family members and form filaments.

Its subcellular location is the cytoplasm. The protein localises to the cytoskeleton. It localises to the spindle. The protein resides in the cleavage furrow. It is found in the midbody. Its subcellular location is the cell cortex. The protein localises to the cell projection. It localises to the cilium membrane. Functionally, filament-forming cytoskeletal GTPase. Required for normal organization of the actin cytoskeleton. Plays a role in the biogenesis of polarized columnar-shaped epithelium by maintaining polyglutamylated microtubules, thus facilitating efficient vesicle transport, and by impeding MAP4 binding to tubulin. Required for the progression through mitosis. Forms a scaffold at the midplane of the mitotic splindle required to maintain CENPE localization at kinetochores and consequently chromosome congression. During anaphase, may be required for chromosome segregation and spindle elongation. Plays a role in ciliogenesis and collective cell movements. In cilia, required for the integrity of the diffusion barrier at the base of the primary cilium that prevents diffusion of transmembrane proteins between the cilia and plasma membranes. The protein is Septin-2 of Gallus gallus (Chicken).